We begin with the raw amino-acid sequence, 90 residues long: Cell division topological specificity factor (90 aa).

This sequence belongs to the MinE family.

In terms of biological role, prevents the cell division inhibition by proteins MinC and MinD at internal division sites while permitting inhibition at polar sites. This ensures cell division at the proper site by restricting the formation of a division septum at the midpoint of the long axis of the cell. In Lachnoclostridium phytofermentans (strain ATCC 700394 / DSM 18823 / ISDg) (Clostridium phytofermentans), this protein is Cell division topological specificity factor.